The sequence spans 198 residues: uncharacterized protein (198 aa).

Positions 20-58 (ERVRRDEELARLSADKEQAKNDLEESKRRIARLRGTVYE) form a coiled coil. Residues 144–198 (LSNRKTKNPESDRRRQSRKKKSTQIQASDEMKHRRHHVHKVHHYSQKQSSSTTRR) form a disordered region. Positions 176–188 (HRRHHVHKVHHYS) are enriched in basic residues. Positions 189-198 (QKQSSSTTRR) are enriched in polar residues.

The protein resides in the nucleus. It is found in the nucleolus. This is an uncharacterized protein from Schizosaccharomyces pombe (strain 972 / ATCC 24843) (Fission yeast).